The sequence spans 104 residues: Thioredoxin (104 aa).

Residues 2–104 (AIVKVTDADF…NLAEVLDKHL (103 aa)) enclose the Thioredoxin domain. Residues Cys29 and Cys32 are joined by a disulfide bond.

It belongs to the thioredoxin family.

Component of the thioredoxin-thioredoxin reductase system. Participates in various redox reactions through the reversible oxidation of its active center dithiol to a disulfide and catalyzes dithiol-disulfide exchange reactions. The chain is Thioredoxin (trxA) from Staphylococcus aureus (strain N315).